Reading from the N-terminus, the 493-residue chain is Probable phospho-2-dehydro-3-deoxyheptonate aldolase, chloroplastic (493 aa).

The transit peptide at M1–S58 directs the protein to the chloroplast.

It belongs to the class-II DAHP synthase family.

The protein localises to the plastid. It is found in the chloroplast. The catalysed reaction is D-erythrose 4-phosphate + phosphoenolpyruvate + H2O = 7-phospho-2-dehydro-3-deoxy-D-arabino-heptonate + phosphate. It functions in the pathway metabolic intermediate biosynthesis; chorismate biosynthesis; chorismate from D-erythrose 4-phosphate and phosphoenolpyruvate: step 1/7. In Catharanthus roseus (Madagascar periwinkle), this protein is Probable phospho-2-dehydro-3-deoxyheptonate aldolase, chloroplastic (DHS1).